The chain runs to 222 residues: Phosphoglycolate phosphatase (222 aa).

The active-site Nucleophile is D8. D8 and D10 together coordinate Mg(2+). K150 serves as a coordination point for substrate. Positions 173 and 177 each coordinate Mg(2+).

This sequence belongs to the archaeal SPP-like hydrolase family. Mg(2+) is required as a cofactor.

It catalyses the reaction 2-phosphoglycolate + H2O = glycolate + phosphate. Functionally, catalyzes the dephosphorylation of 2-phosphoglycolate. In Metallosphaera sedula (strain ATCC 51363 / DSM 5348 / JCM 9185 / NBRC 15509 / TH2), this protein is Phosphoglycolate phosphatase.